A 361-amino-acid chain; its full sequence is tRNA-specific 2-thiouridylase MnmA (361 aa).

ATP contacts are provided by residues 8-15 (GMSGGVDS) and Met34. The interval 94–96 (NPD) is interaction with target base in tRNA. Cys99 (nucleophile) is an active-site residue. A disulfide bridge links Cys99 with Cys195. Residue Gly123 coordinates ATP. The segment at 145–147 (KDQ) is interaction with tRNA. Residue Cys195 is the Cysteine persulfide intermediate of the active site. The interaction with tRNA stretch occupies residues 307–308 (RY).

This sequence belongs to the MnmA/TRMU family.

It is found in the cytoplasm. The enzyme catalyses S-sulfanyl-L-cysteinyl-[protein] + uridine(34) in tRNA + AH2 + ATP = 2-thiouridine(34) in tRNA + L-cysteinyl-[protein] + A + AMP + diphosphate + H(+). In terms of biological role, catalyzes the 2-thiolation of uridine at the wobble position (U34) of tRNA, leading to the formation of s(2)U34. The protein is tRNA-specific 2-thiouridylase MnmA of Legionella pneumophila (strain Lens).